The following is a 258-amino-acid chain: Indole-3-glycerol phosphate synthase (258 aa).

The protein belongs to the TrpC family.

The enzyme catalyses 1-(2-carboxyphenylamino)-1-deoxy-D-ribulose 5-phosphate + H(+) = (1S,2R)-1-C-(indol-3-yl)glycerol 3-phosphate + CO2 + H2O. It participates in amino-acid biosynthesis; L-tryptophan biosynthesis; L-tryptophan from chorismate: step 4/5. The protein is Indole-3-glycerol phosphate synthase of Chlorobium limicola (strain DSM 245 / NBRC 103803 / 6330).